The sequence spans 916 residues: uncharacterized protein (916 aa).

This is an uncharacterized protein from Micromonas pusilla reovirus (isolate Netherlands/2005) (MpRV).